We begin with the raw amino-acid sequence, 551 residues long: Chloride channel CLIC-like protein 1 (551 aa).

Positions 1–18 are cleaved as a signal peptide; it reads MLCSLLLCECLLLVAGYA. Over 19-184 the chain is Lumenal; it reads HDDDWIDPTD…EDSFGVDPYN (166 aa). A helical transmembrane segment spans residues 185 to 205; that stretch reads VLMVLLCLLCIVVLVATELWT. Over 206–216 the chain is Cytoplasmic; the sequence is YVRWYTQLRRV. Residues 217–237 form a helical membrane-spanning segment; that stretch reads LIISFLFSLGWNWMYLYKLAF. The Lumenal segment spans residues 238 to 329; the sequence is AQHQAEVAKM…GEFIKALMKE (92 aa). A helical membrane pass occupies residues 330 to 350; sequence IPALLHLPVLIIMALAILSFC. Topologically, residues 351–551 are cytoplasmic; the sequence is YGAGKSVHVL…GQDPVSSPCG (201 aa). The disordered stretch occupies residues 363–415; sequence IGGPESEPPQALRPRDRRRQEEIDYRPDGGAGDADFHYRGQMGPTEQGPYAKT. Basic and acidic residues predominate over residues 380–389; sequence RRQEEIDYRP. Residues S438 and S464 each carry the phosphoserine modification. The disordered stretch occupies residues 447–551; the sequence is VPDAEAREHP…GQDPVSSPCG (105 aa). T482 carries the post-translational modification Phosphothreonine. The span at 488 to 508 shows a compositional bias: polar residues; it reads TESSQSAKPVSGQDTSGNTEG. Phosphoserine occurs at positions 509, 524, and 532.

This sequence belongs to the chloride channel MCLC family. Homomultimers. Interacts with mitochondrial protein PIGBOS1 (via C-terminus); the interaction occurs at the mitochondria-associated endoplasmic reticulum (ER) membrane, a zone of contact between the ER and mitochondrial membranes, but does not appear to play a role in ER-mitochondria tethering and is not affected by ER stress. Interacts with CALR. In terms of tissue distribution, expressed in the retina of the eye, with extensive expression in the lamina cribrosa, optic nerve, ganglion cell layer, inner nuclear layer, outer nuclear layer and retinal pigment epithelium.

Its subcellular location is the endoplasmic reticulum membrane. It carries out the reaction chloride(in) = chloride(out). It catalyses the reaction bromide(in) = bromide(out). The enzyme catalyses nitrate(in) = nitrate(out). The catalysed reaction is fluoride(in) = fluoride(out). Its activity is regulated as follows. Inhibited by ER lumenal Ca(2+). Its function is as follows. Anion-selective channel with Ca(2+)-dependent and voltage-independent gating. Permeable to small monovalent anions with selectivity for bromide &gt; chloride &gt; nitrate &gt; fluoride. Operates in the endoplasmic reticulum (ER) membrane where it mediates chloride efflux to compensate for the loss of positive charges from the ER lumen upon Ca(2+) release. Contributes to the maintenance of ER Ca(2+) pools and activation of unfolded protein response to prevent accumulation of misfolded proteins in the ER lumen. Particularly involved in ER homeostasis mechanisms underlying motor neurons and retinal photoreceptors survival. This is Chloride channel CLIC-like protein 1 from Homo sapiens (Human).